We begin with the raw amino-acid sequence, 134 residues long: Small ribosomal subunit protein uS12 (134 aa).

Position 89 is a 3-methylthioaspartic acid (Asp-89). The interval 103-134 is disordered; the sequence is DTAGVKDRKQGRSKYGAKRPKPGEAAATGKKK. Positions 113–122 are enriched in basic residues; the sequence is GRSKYGAKRP.

It belongs to the universal ribosomal protein uS12 family. Part of the 30S ribosomal subunit. Contacts proteins S8 and S17. May interact with IF1 in the 30S initiation complex.

With S4 and S5 plays an important role in translational accuracy. In terms of biological role, interacts with and stabilizes bases of the 16S rRNA that are involved in tRNA selection in the A site and with the mRNA backbone. Located at the interface of the 30S and 50S subunits, it traverses the body of the 30S subunit contacting proteins on the other side and probably holding the rRNA structure together. The combined cluster of proteins S8, S12 and S17 appears to hold together the shoulder and platform of the 30S subunit. The polypeptide is Small ribosomal subunit protein uS12 (Thermosynechococcus vestitus (strain NIES-2133 / IAM M-273 / BP-1)).